We begin with the raw amino-acid sequence, 87 residues long: Small ribosomal subunit protein bS20 (87 aa).

The tract at residues methionine 1–methionine 27 is disordered.

It belongs to the bacterial ribosomal protein bS20 family.

In terms of biological role, binds directly to 16S ribosomal RNA. This is Small ribosomal subunit protein bS20 from Erwinia tasmaniensis (strain DSM 17950 / CFBP 7177 / CIP 109463 / NCPPB 4357 / Et1/99).